We begin with the raw amino-acid sequence, 306 residues long: N-acetylmuramic acid 6-phosphate etherase (306 aa).

Residues 59–222 enclose the SIS domain; that stretch reads TAQALGRGGR…STGVMVCLGK (164 aa). The active-site Proton donor is the E87. The active site involves E118.

Belongs to the GCKR-like family. MurNAc-6-P etherase subfamily. In terms of assembly, homodimer.

It carries out the reaction N-acetyl-D-muramate 6-phosphate + H2O = N-acetyl-D-glucosamine 6-phosphate + (R)-lactate. It functions in the pathway amino-sugar metabolism; N-acetylmuramate degradation. In terms of biological role, specifically catalyzes the cleavage of the D-lactyl ether substituent of MurNAc 6-phosphate, producing GlcNAc 6-phosphate and D-lactate. This is N-acetylmuramic acid 6-phosphate etherase from Rippkaea orientalis (strain PCC 8801 / RF-1) (Cyanothece sp. (strain PCC 8801)).